The primary structure comprises 482 residues: tRNA sulfurtransferase (482 aa).

The THUMP domain maps to 61–165 (PAIRDALTRI…NDRLLLVKGR (105 aa)). ATP contacts are provided by residues 183–184 (LI), Lys-265, Gly-287, and Gln-296. A disulfide bridge connects residues Cys-344 and Cys-456. One can recognise a Rhodanese domain in the interval 404-482 (FGANDAILDI…GFSNVKVYRP (79 aa)). The Cysteine persulfide intermediate role is filled by Cys-456.

This sequence belongs to the ThiI family.

It localises to the cytoplasm. It catalyses the reaction [ThiI sulfur-carrier protein]-S-sulfanyl-L-cysteine + a uridine in tRNA + 2 reduced [2Fe-2S]-[ferredoxin] + ATP + H(+) = [ThiI sulfur-carrier protein]-L-cysteine + a 4-thiouridine in tRNA + 2 oxidized [2Fe-2S]-[ferredoxin] + AMP + diphosphate. The enzyme catalyses [ThiS sulfur-carrier protein]-C-terminal Gly-Gly-AMP + S-sulfanyl-L-cysteinyl-[cysteine desulfurase] + AH2 = [ThiS sulfur-carrier protein]-C-terminal-Gly-aminoethanethioate + L-cysteinyl-[cysteine desulfurase] + A + AMP + 2 H(+). It functions in the pathway cofactor biosynthesis; thiamine diphosphate biosynthesis. Functionally, catalyzes the ATP-dependent transfer of a sulfur to tRNA to produce 4-thiouridine in position 8 of tRNAs, which functions as a near-UV photosensor. Also catalyzes the transfer of sulfur to the sulfur carrier protein ThiS, forming ThiS-thiocarboxylate. This is a step in the synthesis of thiazole, in the thiamine biosynthesis pathway. The sulfur is donated as persulfide by IscS. In Klebsiella pneumoniae (strain 342), this protein is tRNA sulfurtransferase.